We begin with the raw amino-acid sequence, 438 residues long: Flagellum-specific ATP synthase (438 aa).

A disordered region spans residues 119–139 (GLSPVSTEQSPPNPMKRPPIR). 165–172 (AGSGVGKS) is a binding site for ATP.

This sequence belongs to the ATPase alpha/beta chains family.

The protein localises to the cytoplasm. The enzyme catalyses ATP + H2O + 4 H(+)(in) = ADP + phosphate + 5 H(+)(out). Its function is as follows. Probable catalytic subunit of a protein translocase for flagellum-specific export, or a proton translocase involved in local circuits at the flagellum. In Bacillus subtilis (strain 168), this protein is Flagellum-specific ATP synthase (fliI).